The primary structure comprises 396 residues: Elongation factor Tu 1 (396 aa).

The tr-type G domain maps to 10 to 206 (KPHVNVGTIG…ALDTYIPTPE (197 aa)). Positions 19-26 (GHVDHGKT) are G1. 19 to 26 (GHVDHGKT) serves as a coordination point for GTP. Threonine 26 serves as a coordination point for Mg(2+). Residues 60–64 (GITIN) form a G2 region. The tract at residues 81–84 (DCPG) is G3. Residues 81 to 85 (DCPGH) and 136 to 139 (NKCD) contribute to the GTP site. A G4 region spans residues 136 to 139 (NKCD). A G5 region spans residues 174–176 (SAK).

This sequence belongs to the TRAFAC class translation factor GTPase superfamily. Classic translation factor GTPase family. EF-Tu/EF-1A subfamily. As to quaternary structure, monomer.

The protein resides in the cytoplasm. The catalysed reaction is GTP + H2O = GDP + phosphate + H(+). GTP hydrolase that promotes the GTP-dependent binding of aminoacyl-tRNA to the A-site of ribosomes during protein biosynthesis. This Acidovorax sp. (strain JS42) protein is Elongation factor Tu 1.